Consider the following 250-residue polypeptide: Cobalt transport protein CbiM (250 aa).

The signal sequence occupies residues Met1–Ala24. 6 helical membrane passes run Leu32–Ile52, Met67–Val87, Leu99–Phe119, Leu122–Met142, Val161–Gln181, and Ile203–Phe223.

Belongs to the CbiM family. In terms of assembly, forms an energy-coupling factor (ECF) transporter complex composed of an ATP-binding protein (A component, CbiO), a transmembrane protein (T component, CbiQ) and 2 possible substrate-capture proteins (S components, CbiM and CbiN) of unknown stoichimetry.

It is found in the cell membrane. The protein operates within cofactor biosynthesis; adenosylcobalamin biosynthesis. Part of the energy-coupling factor (ECF) transporter complex CbiMNOQ involved in cobalt import. This is Cobalt transport protein CbiM from Desulforamulus reducens (strain ATCC BAA-1160 / DSM 100696 / MI-1) (Desulfotomaculum reducens).